Here is a 122-residue protein sequence, read N- to C-terminus: MARIAGVNIPTAKRVVIALQYIHGIGPKKAEEITEKVGIPAERRVNQLTDAEVLQIREAIDRDYIVEGDLRREVSMNIKRLMDLGCYRGLRHRKQLPVRGQRTHTNARTRKGKAKPIAGKKK.

A disordered region spans residues 94–122 (KQLPVRGQRTHTNARTRKGKAKPIAGKKK).

The protein belongs to the universal ribosomal protein uS13 family. In terms of assembly, part of the 30S ribosomal subunit. Forms a loose heterodimer with protein S19. Forms two bridges to the 50S subunit in the 70S ribosome.

In terms of biological role, located at the top of the head of the 30S subunit, it contacts several helices of the 16S rRNA. In the 70S ribosome it contacts the 23S rRNA (bridge B1a) and protein L5 of the 50S subunit (bridge B1b), connecting the 2 subunits; these bridges are implicated in subunit movement. Contacts the tRNAs in the A and P-sites. The protein is Small ribosomal subunit protein uS13 of Methylorubrum extorquens (strain PA1) (Methylobacterium extorquens).